The sequence spans 173 residues: Alpha-crystallin A chain (173 aa).

At M1 the chain carries N-acetylmethionine. The required for complex formation with BFSP1 and BFSP2 stretch occupies residues M1–E63. Position 6 is a deamidated glutamine; partial (Q6). S45 is subject to Phosphoserine. Q50 carries the deamidated glutamine; partial modification. A sHSP domain is found at L52–S162. K70 and K99 each carry N6-acetyllysine. H100 contributes to the Zn(2+) binding site. Deamidated asparagine; partial is present on N101. Residues E102 and H107 each contribute to the Zn(2+) site. S122 carries the post-translational modification Phosphoserine. N123 bears the Deamidated asparagine; partial mark. Residues K145–S173 are disordered. Q147 carries the deamidated glutamine; partial modification. A compositionally biased stretch (basic and acidic residues) spans G153 to P167. H154 lines the Zn(2+) pocket. S162 carries an O-linked (GlcNAc) serine glycan.

This sequence belongs to the small heat shock protein (HSP20) family. As to quaternary structure, heteromer composed of three CRYAA and one CRYAB subunits. Inter-subunit bridging via zinc ions enhances stability, which is crucial as there is no protein turn over in the lens. Can also form homodimers and homotetramers (dimers of dimers) which serve as the building blocks of homooligomers. Within homooligomers, the zinc-binding motif is created from residues of 3 different molecules. His-100 and Glu-102 from one molecule are ligands of the zinc ion, and His-107 and His-154 residues from additional molecules complete the site with tetrahedral coordination geometry. Part of a complex required for lens intermediate filament formation composed of BFSP1, BFSP2 and CRYAA. In terms of processing, acetylation at Lys-70 may increase chaperone activity. Post-translationally, undergoes age-dependent proteolytical cleavage at the C-terminus.

Its subcellular location is the cytoplasm. It is found in the nucleus. Its function is as follows. Contributes to the transparency and refractive index of the lens. Acts as a chaperone, preventing aggregation of various proteins under a wide range of stress conditions. Required for the correct formation of lens intermediate filaments as part of a complex composed of BFSP1, BFSP2 and CRYAA. The chain is Alpha-crystallin A chain (CRYAA) from Meriones unguiculatus (Mongolian jird).